The following is a 186-amino-acid chain: UPF0398 protein LCA_0919 (186 aa).

Belongs to the UPF0398 family.

This is UPF0398 protein LCA_0919 from Latilactobacillus sakei subsp. sakei (strain 23K) (Lactobacillus sakei subsp. sakei).